The following is a 326-amino-acid chain: Probable cell division protein WhiA (326 aa).

A DNA-binding region (H-T-H motif) is located at residues serine 275–alanine 308.

It belongs to the WhiA family.

Its function is as follows. Involved in cell division and chromosome segregation. The chain is Probable cell division protein WhiA from Thermobifida fusca (strain YX).